A 730-amino-acid polypeptide reads, in one-letter code: uncharacterized protein (730 aa).

Residues S82 and S89 each carry the phosphoserine modification. Disordered regions lie at residues 82-114 (SPVR…TGSY) and 447-468 (NTNH…SKNE). Positions 89 to 98 (SIQPSNSGKN) are enriched in polar residues. Residues 449–460 (NHNFTTNNNNEN) show a composition bias toward low complexity. 2 positions are modified to phosphoserine: S483 and S651.

This is an uncharacterized protein from Saccharomyces cerevisiae (strain ATCC 204508 / S288c) (Baker's yeast).